Consider the following 289-residue polypeptide: Somatostatin-like receptor F_48D10.1 (289 aa).

The Extracellular segment spans residues 1–57 (MEPLDQTPGFPLSPEPNYWYETTPSLLLVSYPHLLDISSNQSTQSVPFQGSSALLTA). Residue N40 is glycosylated (N-linked (GlcNAc...) asparagine). Residues 58-79 (VIYITVFVVGLTGNTLAIYVVL) traverse the membrane as a helical segment. At 80-89 (RYAGMKTVTN) the chain is on the cytoplasmic side. A helical transmembrane segment spans residues 90–110 (IYILNLAVADELYIVGLPFLA). Topologically, residues 111–126 (TQNVLSYWPFGSFLCR) are extracellular. C125 and C221 are joined by a disulfide. A helical transmembrane segment spans residues 127–148 (VVMTADSMNQFTSIFCLTVMSI). Residues 149-170 (DRYLAVVHPIRSTKWRHPRVAK) are Cytoplasmic-facing. The helical transmembrane segment at 171-191 (VVSAAVWAVSFVVVLPVVIFS) threads the bilayer. The Extracellular portion of the chain corresponds to 192-240 (DVQVRPSRPLQVGTSSKCLVKRVQETFNSCNMIWPEPKNVWSTAFILYT). A helical transmembrane segment spans residues 241–261 (AMVGFFGPLLIICLCYLLIVI). Residues 262–289 (KVRHRMSAAQVGAVVSTCPLNICCLSRR) lie on the Cytoplasmic side of the membrane.

This sequence belongs to the G-protein coupled receptor 1 family.

The protein localises to the cell membrane. In Takifugu rubripes (Japanese pufferfish), this protein is Somatostatin-like receptor F_48D10.1.